We begin with the raw amino-acid sequence, 130 residues long: Small ribosomal subunit protein uS9 (130 aa).

This sequence belongs to the universal ribosomal protein uS9 family.

In Shewanella pealeana (strain ATCC 700345 / ANG-SQ1), this protein is Small ribosomal subunit protein uS9.